A 306-amino-acid polypeptide reads, in one-letter code: Ribonucleoside-diphosphate reductase small subunit (306 aa).

The Fe cation site is built by Asp66, Glu96, and His99. Tyr103 is an active-site residue. A helical membrane pass occupies residues 153–173; that stretch reads ILMILIEGIFFVSSFAAIAYL. 3 residues coordinate Fe cation: Glu159, Glu193, and His196.

This sequence belongs to the ribonucleoside diphosphate reductase small chain family. In terms of assembly, heterotetramer composed of a homodimer of the large subunit (R1) and a homodimer of the small subunit (R2). Larger multisubunit protein complex are also active, composed of (R1)n(R2)n. Fe cation is required as a cofactor.

It localises to the host membrane. It catalyses the reaction a 2'-deoxyribonucleoside 5'-diphosphate + [thioredoxin]-disulfide + H2O = a ribonucleoside 5'-diphosphate + [thioredoxin]-dithiol. Functionally, ribonucleoside-diphosphate reductase holoenzyme provides the precursors necessary for viral DNA synthesis. Allows virus growth in non-dividing cells, as well as reactivation from latency in infected hosts. Catalyzes the biosynthesis of deoxyribonucleotides from the corresponding ribonucleotides. The protein is Ribonucleoside-diphosphate reductase small subunit of Varicella-zoster virus (strain Dumas) (HHV-3).